Here is a 246-residue protein sequence, read N- to C-terminus: Lipoprotein-releasing system ATP-binding protein LolD 1 (246 aa).

The 239-residue stretch at 6-244 folds into the ABC transporter domain; that stretch reads LKLERIRKDL…ASVTNEAASL (239 aa). 43-50 lines the ATP pocket; it reads GPSGSGKS.

It belongs to the ABC transporter superfamily. Lipoprotein translocase (TC 3.A.1.125) family. In terms of assembly, the complex is composed of two ATP-binding proteins (LolD) and two transmembrane proteins (LolC and LolE).

The protein resides in the cell inner membrane. Its function is as follows. Part of the ABC transporter complex LolCDE involved in the translocation of mature outer membrane-directed lipoproteins, from the inner membrane to the periplasmic chaperone, LolA. Responsible for the formation of the LolA-lipoprotein complex in an ATP-dependent manner. The protein is Lipoprotein-releasing system ATP-binding protein LolD 1 of Chlorobium chlorochromatii (strain CaD3).